The sequence spans 220 residues: Fructose-6-phosphate aldolase 2 (220 aa).

Lysine 85 functions as the Schiff-base intermediate with substrate in the catalytic mechanism.

Belongs to the transaldolase family. Type 3A subfamily. In terms of assembly, homodecamer.

The protein resides in the cytoplasm. It catalyses the reaction beta-D-fructose 6-phosphate = dihydroxyacetone + D-glyceraldehyde 3-phosphate. Its function is as follows. Catalyzes the reversible formation of fructose 6-phosphate from dihydroxyacetone and D-glyceraldehyde 3-phosphate via an aldolization reaction. Can utilize hydroxyacetone as an alternative donor substrate. Is also able to catalyze the direct self-aldol addition of glycolaldehyde. Is less catalytically efficient than the isozyme FsaA. Does not display transaldolase activity. The sequence is that of Fructose-6-phosphate aldolase 2 (fsaB) from Escherichia coli (strain K12).